We begin with the raw amino-acid sequence, 363 residues long: MNYEFERESGFINSQPSLAECLTSFPPVADSFQSSSIKSSTLSRPTLIPPPFEQTIPSLNPGSHPRHGRPRHSPDGCSPLPTASLPPEYPWMREKKASKRNHLPNSTTTTISNGPVCFSPKGSPEIVESAGGGGGGSRRLRTAYTNTQLLELEKEFHFNKYLCRPRRVEIAALLDLTERQVKVWFQNRRMKHKRQTQSKENHNAEGKGPSTEEGIHSDEEDEAPVFDRSGALLERDTCSFQKKSHGSAQQHHNSVSMGFAAAPLNSNDKNLKHFPNPSPTVPGCMSTIGPGSASGPDNSDSPPALDVSIHDFQPFSSDSCLQLSDAASPSLSESLDSPVDISTDSFYFFSESLTTIDLQHLSY.

Disordered regions lie at residues 30 to 88 (DSFQ…LPPE), 98 to 117 (SKRN…GPVC), 189 to 220 (RMKH…SDEE), and 268 to 308 (DKNL…LDVS). Positions 31-44 (SFQSSSIKSSTLSR) are enriched in polar residues. The Antp-type hexapeptide signature appears at 88-93 (EYPWMR). Residues 103-113 (LPNSTTTTISN) are compositionally biased toward polar residues. A DNA-binding region (homeobox) is located at residues 137–196 (SRRLRTAYTNTQLLELEKEFHFNKYLCRPRRVEIAALLDLTERQVKVWFQNRRMKHKRQT).

It belongs to the Antp homeobox family. Proboscipedia subfamily.

Its subcellular location is the nucleus. Its function is as follows. Sequence-specific transcription factor which is part of a developmental regulatory system that provides cells with specific positional identities on the anterior-posterior axis. The sequence is that of Homeobox protein Hox-A2a (hoxa2a) from Takifugu rubripes (Japanese pufferfish).